Here is a 223-residue protein sequence, read N- to C-terminus: Ribose-5-phosphate isomerase A (223 aa).

Residues 28–31 (TGST), 81–84 (DGTD), and 94–97 (KGGG) each bind substrate. The Proton acceptor role is filled by glutamate 103. Substrate is bound at residue lysine 121.

It belongs to the ribose 5-phosphate isomerase family. Homodimer.

It carries out the reaction aldehydo-D-ribose 5-phosphate = D-ribulose 5-phosphate. Its pathway is carbohydrate degradation; pentose phosphate pathway; D-ribose 5-phosphate from D-ribulose 5-phosphate (non-oxidative stage): step 1/1. Its function is as follows. Catalyzes the reversible conversion of ribose-5-phosphate to ribulose 5-phosphate. This is Ribose-5-phosphate isomerase A from Baumannia cicadellinicola subsp. Homalodisca coagulata.